A 160-amino-acid chain; its full sequence is 2-C-methyl-D-erythritol 2,4-cyclodiphosphate synthase (160 aa).

The a divalent metal cation site is built by aspartate 11 and histidine 13. 4-CDP-2-C-methyl-D-erythritol 2-phosphate contacts are provided by residues aspartate 11–histidine 13 and histidine 37–serine 38. Histidine 45 lines the a divalent metal cation pocket. Residues aspartate 59–glycine 61, threonine 135–glutamate 138, and arginine 145 each bind 4-CDP-2-C-methyl-D-erythritol 2-phosphate.

It belongs to the IspF family. As to quaternary structure, homotrimer. Requires a divalent metal cation as cofactor.

It catalyses the reaction 4-CDP-2-C-methyl-D-erythritol 2-phosphate = 2-C-methyl-D-erythritol 2,4-cyclic diphosphate + CMP. It functions in the pathway isoprenoid biosynthesis; isopentenyl diphosphate biosynthesis via DXP pathway; isopentenyl diphosphate from 1-deoxy-D-xylulose 5-phosphate: step 4/6. Functionally, involved in the biosynthesis of isopentenyl diphosphate (IPP) and dimethylallyl diphosphate (DMAPP), two major building blocks of isoprenoid compounds. Catalyzes the conversion of 4-diphosphocytidyl-2-C-methyl-D-erythritol 2-phosphate (CDP-ME2P) to 2-C-methyl-D-erythritol 2,4-cyclodiphosphate (ME-CPP) with a corresponding release of cytidine 5-monophosphate (CMP). The chain is 2-C-methyl-D-erythritol 2,4-cyclodiphosphate synthase from Synechococcus elongatus (strain ATCC 33912 / PCC 7942 / FACHB-805) (Anacystis nidulans R2).